The sequence spans 361 residues: Mannonate dehydratase 1 (361 aa).

Belongs to the mannonate dehydratase family. The cofactor is Fe(2+). Requires Mn(2+) as cofactor.

The enzyme catalyses D-mannonate = 2-dehydro-3-deoxy-D-gluconate + H2O. It participates in carbohydrate metabolism; pentose and glucuronate interconversion. In terms of biological role, catalyzes the dehydration of D-mannonate. The chain is Mannonate dehydratase 1 (uxuA1) from Halalkalibacterium halodurans (strain ATCC BAA-125 / DSM 18197 / FERM 7344 / JCM 9153 / C-125) (Bacillus halodurans).